The sequence spans 176 residues: Envelope protein 167 (176 aa).

Met-1 is a topological domain (intravirion). The helical transmembrane segment at 2 to 22 (YLVLLIAIILFITIILVIFLI) threads the bilayer. Residues 23–176 (SGLFYPEQNP…AVMAIPRKVL (154 aa)) are Virion surface-facing.

This sequence belongs to the asfivirus envelope protein p22 family.

The protein resides in the virion membrane. It is found in the host cell membrane. In African swine fever virus (isolate Warthog/Namibia/Wart80/1980) (ASFV), this protein is Envelope protein 167.